A 488-amino-acid chain; its full sequence is E3 ubiquitin-protein ligase TRIM39 (488 aa).

The segment at 29 to 70 adopts an RING-type zinc-finger fold; the sequence is CSVCLEYLKEPVIIECGHNFCKACITRWWEDLERDFPCPVCR. The B box-type zinc finger occupies 102 to 143; that stretch reads RDESLCSQHHEPLSLFCYEDQEAVCLICAISHTHRAHTVVPM. Zn(2+)-binding residues include C107, H110, C129, and H135. Positions 181-250 form a coiled coil; the sequence is ELKRLVESRR…AHLAAEVEGK (70 aa). Interaction with CDKN1A regions lie at residues 268 to 307 and 359 to 488; these read KCEK…QLIA and TSGR…TDWE. In terms of domain architecture, B30.2/SPRY spans 289-484; sequence SHFPRQYFAL…NAAPLTIRPP (196 aa).

Belongs to the TRIM/RBCC family. As to quaternary structure, interacts with MOAP1. Interacts with CDKN1A. Post-translationally, autoubiquitinated.

The protein resides in the cytoplasm. The protein localises to the cytosol. It is found in the mitochondrion. It localises to the nucleus. It catalyses the reaction S-ubiquitinyl-[E2 ubiquitin-conjugating enzyme]-L-cysteine + [acceptor protein]-L-lysine = [E2 ubiquitin-conjugating enzyme]-L-cysteine + N(6)-ubiquitinyl-[acceptor protein]-L-lysine.. Its pathway is protein modification; protein ubiquitination. Its function is as follows. E3 ubiquitin-protein ligase. May facilitate apoptosis by inhibiting APC/C-Cdh1-mediated poly-ubiquitination and subsequent proteasome-mediated degradation of the pro-apoptotic protein MOAP1. Regulates the G1/S transition of the cell cycle and DNA damage-induced G2 arrest by stabilizing CDKN1A/p21. Positively regulates CDKN1A/p21 stability by competing with DTL for CDKN1A/p21 binding, therefore disrupting DCX(DTL) E3 ubiquitin ligase complex-mediated CDKN1A/p21 ubiquitination and degradation. The chain is E3 ubiquitin-protein ligase TRIM39 (Trim39) from Rattus norvegicus (Rat).